Reading from the N-terminus, the 251-residue chain is Adenosylcobinamide-GDP ribazoletransferase (251 aa).

The next 5 membrane-spanning stretches (helical) occupy residues 44–64, 114–134, 143–163, 177–197, and 198–218; these read LVGLLAGLVCAGPFLLGLLAG, IGAFGVLGIVFGVLGQVVLAH, GALVWAPVLGRAACVVLAACV, AGATHMTVLFCAGVTAATGVA, and LAGPPAVLAAALPCACAVVWL.

It belongs to the CobS family. The cofactor is Mg(2+).

Its subcellular location is the cell inner membrane. It catalyses the reaction alpha-ribazole + adenosylcob(III)inamide-GDP = adenosylcob(III)alamin + GMP + H(+). The enzyme catalyses alpha-ribazole 5'-phosphate + adenosylcob(III)inamide-GDP = adenosylcob(III)alamin 5'-phosphate + GMP + H(+). Its pathway is cofactor biosynthesis; adenosylcobalamin biosynthesis; adenosylcobalamin from cob(II)yrinate a,c-diamide: step 7/7. Functionally, joins adenosylcobinamide-GDP and alpha-ribazole to generate adenosylcobalamin (Ado-cobalamin). Also synthesizes adenosylcobalamin 5'-phosphate from adenosylcobinamide-GDP and alpha-ribazole 5'-phosphate. The protein is Adenosylcobinamide-GDP ribazoletransferase of Nitratidesulfovibrio vulgaris (strain DSM 19637 / Miyazaki F) (Desulfovibrio vulgaris).